Reading from the N-terminus, the 432-residue chain is Keratin, type I cytoskeletal 18-B (432 aa).

A compositionally biased stretch (low complexity) spans 1–21 (MSYSRSMYSSSSVVGGSPYRS). Residues 1-44 (MSYSRSMYSSSSVVGGSPYRSLSSAPRFAPGSSAASVHAGPGGS) are disordered. Residues 2–82 (SYSRSMYSSS…NVSLMGGAQN (81 aa)) form a head region. Residues 83 to 118 (EKETMQDLNDRLASYLERVRSLETANKELEVQIRQH) form a coil 1A region. The region spanning 83–393 (EKETMQDLND…RLLEGDSFDL (311 aa)) is the IF rod domain. The segment at 119-134 (TEKKGPAKDWSPYYKA) is linker 1. The tract at residues 135–226 (IEDLKKQVFD…KNHQDDVNEL (92 aa)) is coil 1B. The interval 227–250 (QAQIARSAVTVEVDAPKSQDLGKI) is linker 12. Positions 251 to 388 (MAELRAQYDG…IHTYRRLLEG (138 aa)) are coil 2. Positions 389-432 (DSFDLQDAVPTVTTQTVKKVITTTQRIVDGKVVAESNDTEVLKA) are tail.

The protein belongs to the intermediate filament family. In terms of assembly, heterotetramer of two type I and two type II keratins. Keratin-18 associates with keratin-8. In terms of processing, phosphorylated. Post-translationally, proteolytically cleaved by caspases during epithelial cell apoptosis.

In terms of biological role, when phosphorylated, plays a role in filament reorganization. This chain is Keratin, type I cytoskeletal 18-B (krt18-b), found in Xenopus laevis (African clawed frog).